The sequence spans 377 residues: Flap endonuclease 1 (377 aa).

An N-domain region spans residues 1–105; it reads MGIKGLSQVI…GELAKRASRQ (105 aa). Aspartate 34 provides a ligand contact to Mg(2+). 2 residues coordinate DNA: arginine 47 and arginine 71. Aspartate 87 lines the Mg(2+) pocket. Positions 96–115 are disordered; that stretch reads GELAKRASRQQKAREEREEA. Residues 123 to 254 are I-domain; the sequence is MVDKFAKRTV…ARAVELIRQH (132 aa). The Mg(2+) site is built by glutamate 159, glutamate 161, aspartate 180, and aspartate 182. DNA is bound at residue glutamate 159. Positions 232 and 234 each coordinate DNA. Aspartate 234 is a binding site for Mg(2+). The segment at 337 to 345 is interaction with PCNA; sequence PQGRLDSFF. Positions 350 to 377 are disordered; sequence STKKEKEKPKAAAKRKRDTKSSAPKKKR. A compositionally biased stretch (basic residues) spans 360–377; the sequence is AAAKRKRDTKSSAPKKKR.

The protein belongs to the XPG/RAD2 endonuclease family. FEN1 subfamily. As to quaternary structure, interacts with PCNA. Three molecules of rad2 bind to one PCNA trimer with each molecule binding to one PCNA monomer. PCNA stimulates the nuclease activity without altering cleavage specificity. Requires Mg(2+) as cofactor. Phosphorylated. Phosphorylation upon DNA damage induces relocalization to the nuclear plasma.

Its subcellular location is the nucleus. The protein resides in the nucleolus. It localises to the nucleoplasm. It is found in the mitochondrion. Its function is as follows. Structure-specific nuclease with 5'-flap endonuclease and 5'-3' exonuclease activities involved in DNA replication and repair. During DNA replication, cleaves the 5'-overhanging flap structure that is generated by displacement synthesis when DNA polymerase encounters the 5'-end of a downstream Okazaki fragment. It enters the flap from the 5'-end and then tracks to cleave the flap base, leaving a nick for ligation. Also involved in the long patch base excision repair (LP-BER) pathway, by cleaving within the apurinic/apyrimidinic (AP) site-terminated flap. Acts as a genome stabilization factor that prevents flaps from equilibrating into structures that lead to duplications and deletions. Also possesses 5'-3' exonuclease activity on nicked or gapped double-stranded DNA, and exhibits RNase H activity. Also involved in replication and repair of rDNA and in repairing mitochondrial DNA. In Schizosaccharomyces japonicus (strain yFS275 / FY16936) (Fission yeast), this protein is Flap endonuclease 1.